The chain runs to 90 residues: Protein AF1q (90 aa).

A Nuclear export signal motif is present at residues 24–32; that stretch reads LSELEGLGL. Residue S84 is modified to Phosphoserine.

It belongs to the MLLT11 family. As to quaternary structure, interacts with HSPA8 and LAMP2 isoform A; the interaction may target MLLT11 for degradation via chaperone-mediated autophagy. Interacts with TCF7. Post-translationally, ubiquitinated, leading to degradation.

It localises to the nucleus. The protein localises to the cytoplasm. It is found in the cytoskeleton. Its subcellular location is the microtubule organizing center. The protein resides in the centrosome. In terms of biological role, cofactor for the transcription factor TCF7. Involved in regulation of lymphoid development by driving multipotent hematopoietic progenitor cells towards a T-cell fate. The polypeptide is Protein AF1q (MLLT11) (Pongo abelii (Sumatran orangutan)).